A 413-amino-acid chain; its full sequence is Gamma-lactamase FDB1 (413 aa).

Residues histidine 126, histidine 128, aspartate 130, histidine 131, histidine 211, aspartate 235, and histidine 323 each contribute to the Zn(2+) site.

The protein belongs to the metallo-beta-lactamase superfamily.

It participates in xenobiotic degradation. Functionally, gamma-lactamase; part of the Fusarium detoxification of benzoxazolinone cluster involved in the degradation of benzoxazolinones produced by the host plant. Maize, wheat, and rye produce the 2 benzoxazinone phytoanticipins 2,4-dihy-droxy-7-methoxy-1,4-benzoxazin-3-one (DIMBOA) and 2,4-dihydroxy-1,4-benzoxazin-3-one (DIBOA) that, due to their inherent instability once released, spontaneously degrade to the more stable corresponding benzoxazolinones, 6-methoxy-2-benzoxazolinone (MBOA) and 2-benzoxazolinone (BOA), respectively. The first step in the detoxification of benzoxazolinones involves the hydrolysis of the cyclic ester bond of benzoxazolinones by the gamma-lactamase FDB1 to aminophenols. FDB1 is able to convert BOA into 2-aminophenol (2-AP), as well as MBOA into 5-methoxy-2-aminophenol (2-AMP). The N-malonyltransferase FDB2 then metabolizes aminophenols via N-malonylation to non-toxic malonamic acids. FDB2 converts 2-AP into N-(2-hydroxyphenyl) malonamic acid (HPMA) and 2-AMP into N-(2-hydroxy-4-methoxyphenyl) malonamic acid (HMPMA). The cluster also contains 2 transcription factors (FDB3 and FPSE_08121), an aldo-keto reductase (FPSE_08125) that possibly associates with a ketone component of BOA and MBOA degradation, an esterase (FPSE_08126), an acyl-CoA transferase (FPSE_08120), a solute carrier protein (FPSE_08119) and a transmembrane transporter (FPSE_08127) proposed to shuttle metabolites of benzoxazolinone degradation. This Fusarium pseudograminearum (strain CS3096) (Wheat and barley crown-rot fungus) protein is Gamma-lactamase FDB1.